A 275-amino-acid chain; its full sequence is MRNTVSTFQELKDRGEKITMLTAYDYSMAKLIDSSGINGILVGDSLGMVCLGYENTLSVTMEDMIHHTKAVVRGTSNALVVGDMPFMSYQTSIYDAVYNAGRFIKEAGAHAVKLEGGATVAEEIKAIVKAQIPVMGHIGLTPQSVNMFGGFKVQGKNEKVAKKLIEDAKILEEAGAFSIVLECIPEKLSKIISESISIPTIGIGAGKYCDGQILVYQDMLSMFSDFKPKFVKSFGNIGESIKDGVSQYIKEVKESKFPEEKHAFKIDDDVINKLY.

Mg(2+)-binding residues include Asp44 and Asp83. 3-methyl-2-oxobutanoate contacts are provided by residues 44 to 45, Asp83, and Lys113; that span reads DS. Glu115 lines the Mg(2+) pocket. The Proton acceptor role is filled by Glu182.

This sequence belongs to the PanB family. As to quaternary structure, homodecamer; pentamer of dimers. Requires Mg(2+) as cofactor.

The protein localises to the cytoplasm. The catalysed reaction is 3-methyl-2-oxobutanoate + (6R)-5,10-methylene-5,6,7,8-tetrahydrofolate + H2O = 2-dehydropantoate + (6S)-5,6,7,8-tetrahydrofolate. The protein operates within cofactor biosynthesis; (R)-pantothenate biosynthesis; (R)-pantoate from 3-methyl-2-oxobutanoate: step 1/2. In terms of biological role, catalyzes the reversible reaction in which hydroxymethyl group from 5,10-methylenetetrahydrofolate is transferred onto alpha-ketoisovalerate to form ketopantoate. The protein is 3-methyl-2-oxobutanoate hydroxymethyltransferase of Clostridium botulinum (strain 657 / Type Ba4).